The chain runs to 95 residues: Acylphosphatase (95 aa).

The region spanning 8–95 (RAKILVRGKV…GNFRTFEIKK (88 aa)) is the Acylphosphatase-like domain. Residues Arg23 and Asn41 contribute to the active site.

Belongs to the acylphosphatase family.

It catalyses the reaction an acyl phosphate + H2O = a carboxylate + phosphate + H(+). This chain is Acylphosphatase (acyP), found in Leptospira interrogans serogroup Icterohaemorrhagiae serovar copenhageni (strain Fiocruz L1-130).